The following is a 434-amino-acid chain: Adenylosuccinate synthetase (434 aa).

GTP is bound by residues 25–31 (GDEGKGK) and 53–55 (GHT). Catalysis depends on aspartate 26, which acts as the Proton acceptor. 2 residues coordinate Mg(2+): aspartate 26 and glycine 53. Residues 26–29 (DEGK), 51–54 (NAGH), threonine 142, arginine 156, asparagine 233, threonine 248, and arginine 312 each bind IMP. Catalysis depends on histidine 54, which acts as the Proton donor. 308 to 314 (VTTGRKR) lines the substrate pocket. Residues arginine 314, 340 to 342 (KLD), and 422 to 424 (GVG) each bind GTP.

The protein belongs to the adenylosuccinate synthetase family. As to quaternary structure, homodimer. Mg(2+) serves as cofactor.

The protein localises to the cytoplasm. It catalyses the reaction IMP + L-aspartate + GTP = N(6)-(1,2-dicarboxyethyl)-AMP + GDP + phosphate + 2 H(+). The protein operates within purine metabolism; AMP biosynthesis via de novo pathway; AMP from IMP: step 1/2. Its function is as follows. Plays an important role in the de novo pathway and in the salvage pathway of purine nucleotide biosynthesis. Catalyzes the first committed step in the biosynthesis of AMP from IMP. The chain is Adenylosuccinate synthetase from Schizosaccharomyces japonicus (strain yFS275 / FY16936) (Fission yeast).